The primary structure comprises 497 residues: Cobyric acid synthase (497 aa).

The region spanning 250–445 (EVTIAVIRLP…LHGIFNNGPW (196 aa)) is the GATase cobBQ-type domain. Cys-331 functions as the Nucleophile in the catalytic mechanism. The active site involves His-437.

It belongs to the CobB/CobQ family. CobQ subfamily.

Its pathway is cofactor biosynthesis; adenosylcobalamin biosynthesis. Its function is as follows. Catalyzes amidations at positions B, D, E, and G on adenosylcobyrinic A,C-diamide. NH(2) groups are provided by glutamine, and one molecule of ATP is hydrogenolyzed for each amidation. The chain is Cobyric acid synthase from Acaryochloris marina (strain MBIC 11017).